The chain runs to 275 residues: Protein COFACTOR ASSEMBLY OF COMPLEX C SUBUNIT B CCB2, chloroplastic (275 aa).

A chloroplast-targeting transit peptide spans 1–19; sequence MSIQICNFPFHPKFALQPR. Topologically, residues 20 to 65 are stromal; the sequence is AQRSTRIFARTENDSPQSKTSDQQLNLSVLRFTFGIPGFDESYLPR. Residues 66–86 form a helical membrane-spanning segment; it reads WIGYGFGSLLLLNHFSASAPI. Over 87–93 the chain is Lumenal; sequence SESQMRS. A helical membrane pass occupies residues 94–114; the sequence is EALGLSLAAFSIALPYIGKFL. The Stromal segment spans residues 115–275; sequence KGSVVEQRSL…IGAMAEKFRG (161 aa).

It is found in the plastid. The protein localises to the chloroplast thylakoid membrane. Required for the biogenesis and accumulation of native cytochrome b6 in the thylakoid membrane. Controls the conversion of apocytochrome b6 to holocytochrome b6. Required for covalent binding of the c-type heme to cytochrome b6. The polypeptide is Protein COFACTOR ASSEMBLY OF COMPLEX C SUBUNIT B CCB2, chloroplastic (Arabidopsis thaliana (Mouse-ear cress)).